The sequence spans 346 residues: CLOCK-interacting pacemaker (346 aa).

A compositionally biased stretch (basic and acidic residues) spans 1–42; it reads MEKNQKCATEQERFKARSGHGDGQRAEPRKTQTTTESDKDSG. 2 disordered regions span residues 1–83 and 167–228; these read MEKN…SQPQ and CARK…KELD. Polar residues predominate over residues 50–68; the sequence is CLSSVEQTDTEEGPTTSRW. Over residues 179–192 the composition is skewed to basic residues; that stretch reads NQTKRQCSKGHSGS. Polar residues predominate over residues 205 to 222; it reads GVQQGPVDQNVKESSVSA. Residues 283 to 315 are a coiled coil; the sequence is MKTKELARHNQATQSQLEKLQEQVQLYATAMSS.

The protein resides in the nucleus. Its subcellular location is the cytoplasm. It localises to the cytosol. Functionally, transcriptional repressor which acts as a negative-feedback regulator of CLOCK-BMAL1 transcriptional activity in the circadian-clock mechanism. The physiological relevance of these observations is unsure. The sequence is that of CLOCK-interacting pacemaker (cipc) from Xenopus laevis (African clawed frog).